A 498-amino-acid polypeptide reads, in one-letter code: COP9 signalosome complex subunit 1 (498 aa).

One can recognise a PCI domain in the interval 249–430 (SYLEAANSFI…HVLVSTQGDK (182 aa)).

Belongs to the CSN1 family. As to quaternary structure, component of the COP9 signalosome (CSN) complex.

Its subcellular location is the cytoplasm. It is found in the nucleus. Its function is as follows. Component of the COP9 signalosome (CSN) complex that acts as an regulator of the ubiquitin (Ubl) conjugation pathway by mediating the deneddylation of the cullin subunit of SCF-type E3 ubiquitin-protein ligase complexes. The CSN complex seems to link protein degradation to sexual development. Required for fruit body formation. This Emericella nidulans (strain FGSC A4 / ATCC 38163 / CBS 112.46 / NRRL 194 / M139) (Aspergillus nidulans) protein is COP9 signalosome complex subunit 1 (csnA).